The primary structure comprises 201 residues: Ribonuclease HII (201 aa).

The region spanning 12 to 201 is the RNase H type-2 domain; sequence DLVAGVDEVG…VRELLDASVE (190 aa). A divalent metal cation-binding residues include D18, E19, and D110.

The protein belongs to the RNase HII family. Mn(2+) serves as cofactor. The cofactor is Mg(2+).

It localises to the cytoplasm. The enzyme catalyses Endonucleolytic cleavage to 5'-phosphomonoester.. In terms of biological role, endonuclease that specifically degrades the RNA of RNA-DNA hybrids. In Pseudomonas paraeruginosa (strain DSM 24068 / PA7) (Pseudomonas aeruginosa (strain PA7)), this protein is Ribonuclease HII.